We begin with the raw amino-acid sequence, 456 residues long: Vitamin K-dependent protein C (456 aa).

The first 20 residues, 1–20 (MWQLASLSLLLTICGTCSTA), serve as a signal peptide directing secretion. The propeptide occupies 21 to 42 (APPGSVFSSSESAHQVLRIRKR). One can recognise a Gla domain in the interval 47–88 (LEEIRAGSLERECMEEICDFEEAKEIFQNVDDTLAYWSKYVD). A 4-carboxyglutamate mark is found at glutamate 48, glutamate 49, glutamate 56, glutamate 58, glutamate 61, glutamate 62, glutamate 67, glutamate 68, and glutamate 71. Cysteine 59 and cysteine 64 are disulfide-bonded. 4 disulfide bridges follow: cysteine 92/cysteine 111, cysteine 101/cysteine 106, cysteine 105/cysteine 120, and cysteine 122/cysteine 131. 2 consecutive EGF-like domains span residues 97 to 132 (PEHACDSPCCGHGSCIDGIGAFHCDCGRGWEGRFCQ) and 136 to 176 (SYIN…LQCQ). Aspartate 113 carries the (3R)-3-hydroxyaspartate modification. An N-linked (GlcNAc...) asparagine glycan is attached at asparagine 139. 5 cysteine pairs are disulfide-bonded: cysteine 140–cysteine 151, cysteine 147–cysteine 160, cysteine 162–cysteine 175, cysteine 183–cysteine 318, and cysteine 237–cysteine 253. Residue asparagine 202 is glycosylated (N-linked (GlcNAc...) asparagine). Residues 211–445 (LVNGKVTRRG…YLDWIHSHIR (235 aa)) form the Peptidase S1 domain. Histidine 252 acts as the Charge relay system in catalysis. A glycan (N-linked (GlcNAc...) asparagine) is linked at asparagine 289. The Charge relay system role is filled by aspartate 298. A glycan (N-linked (GlcNAc...) asparagine) is linked at asparagine 350. 2 cysteine pairs are disulfide-bonded: cysteine 368-cysteine 382 and cysteine 393-cysteine 421. Residue serine 397 is the Charge relay system of the active site.

The protein belongs to the peptidase S1 family. Synthesized as a single chain precursor, which is cleaved into a light chain and a heavy chain held together by a disulfide bond. The enzyme is then activated by thrombin, which cleaves a tetradecapeptide from the amino end of the heavy chain; this reaction, which occurs at the surface of endothelial cells, is strongly promoted by thrombomodulin. Post-translationally, the vitamin K-dependent, enzymatic carboxylation of some Glu residues allows the modified protein to bind calcium. The iron and 2-oxoglutarate dependent 3-hydroxylation of aspartate and asparagine is (R) stereospecific within EGF domains. Plasma; synthesized in the liver.

It is found in the secreted. Its subcellular location is the golgi apparatus. The protein localises to the endoplasmic reticulum. The enzyme catalyses Degradation of blood coagulation factors Va and VIIIa.. Its function is as follows. Protein C is a vitamin K-dependent serine protease that regulates blood coagulation by inactivating factors Va and VIIIa in the presence of calcium ions and phospholipids. Exerts a protective effect on the endothelial cell barrier function. The polypeptide is Vitamin K-dependent protein C (PROC) (Canis lupus familiaris (Dog)).